A 355-amino-acid polypeptide reads, in one-letter code: Small ribosomal subunit protein uS2 (355 aa).

Belongs to the universal ribosomal protein uS2 family.

In Methylobacterium radiotolerans (strain ATCC 27329 / DSM 1819 / JCM 2831 / NBRC 15690 / NCIMB 10815 / 0-1), this protein is Small ribosomal subunit protein uS2.